The primary structure comprises 416 residues: UDP-N-acetylmuramoylalanine--D-glutamate ligase (416 aa).

Residue 104-110 coordinates ATP; it reads GSNGKST.

It belongs to the MurCDEF family.

The protein localises to the cytoplasm. The catalysed reaction is UDP-N-acetyl-alpha-D-muramoyl-L-alanine + D-glutamate + ATP = UDP-N-acetyl-alpha-D-muramoyl-L-alanyl-D-glutamate + ADP + phosphate + H(+). It functions in the pathway cell wall biogenesis; peptidoglycan biosynthesis. Its function is as follows. Cell wall formation. Catalyzes the addition of glutamate to the nucleotide precursor UDP-N-acetylmuramoyl-L-alanine (UMA). This Francisella tularensis subsp. tularensis (strain WY96-3418) protein is UDP-N-acetylmuramoylalanine--D-glutamate ligase.